Here is a 183-residue protein sequence, read N- to C-terminus: Adenine phosphoribosyltransferase (183 aa).

This sequence belongs to the purine/pyrimidine phosphoribosyltransferase family. In terms of assembly, homodimer.

Its subcellular location is the cytoplasm. It catalyses the reaction AMP + diphosphate = 5-phospho-alpha-D-ribose 1-diphosphate + adenine. It participates in purine metabolism; AMP biosynthesis via salvage pathway; AMP from adenine: step 1/1. In terms of biological role, catalyzes a salvage reaction resulting in the formation of AMP, that is energically less costly than de novo synthesis. The sequence is that of Adenine phosphoribosyltransferase from Shigella flexneri serotype 5b (strain 8401).